Consider the following 469-residue polypeptide: tRNA (cytosine(72)-C(5))-methyltransferase NSUN6 (469 aa).

In terms of domain architecture, PUA spans Gln111 to Tyr203. S-adenosyl-L-methionine-binding positions include Cys242 to Lys248, Asp266, Asp293, and Asp323. The Nucleophile role is filled by Cys373. An N6-acetyllysine modification is found at Lys419.

Belongs to the class I-like SAM-binding methyltransferase superfamily. RsmB/NOP family.

The protein resides in the cytoplasm. It carries out the reaction cytidine(72) in tRNA(Thr) + S-adenosyl-L-methionine = 5-methylcytidine(72) in tRNA(Thr) + S-adenosyl-L-homocysteine + H(+). It catalyses the reaction cytidine(72) in tRNA(Cys) + S-adenosyl-L-methionine = 5-methylcytidine(72) in tRNA(Cys) + S-adenosyl-L-homocysteine + H(+). Its function is as follows. S-adenosyl-L-methionine-dependent methyltransferase that specifically methylates the C5 position of cytosine 72 in tRNA(Thr)(TGT) and tRNA(Cys)(GCA). In vitro also methylates tRNA(Thr)(AGT). Methylation requires, in the acceptor stem region, the presence of the 3'-CCA terminus, the target site C72, the discriminator base U73, and the second and third base pairs (2:71 and 3:70) in the tRNA substrates. The polypeptide is tRNA (cytosine(72)-C(5))-methyltransferase NSUN6 (Homo sapiens (Human)).